A 284-amino-acid chain; its full sequence is ATP synthase subunit a (284 aa).

The next 6 helical transmembrane spans lie at 55–75 (AIHV…LGLF), 116–136 (IAPL…LKLI), 165–185 (FGMS…VKGV), 196–216 (PFNH…ALII), 234–254 (VVFI…NVPW), and 255–275 (AIFH…LTVV).

The protein belongs to the ATPase A chain family. F-type ATPases have 2 components, CF(1) - the catalytic core - and CF(0) - the membrane proton channel. CF(1) has five subunits: alpha(3), beta(3), gamma(1), delta(1), epsilon(1). CF(0) has three main subunits: a(1), b(2) and c(9-12). The alpha and beta chains form an alternating ring which encloses part of the gamma chain. CF(1) is attached to CF(0) by a central stalk formed by the gamma and epsilon chains, while a peripheral stalk is formed by the delta and b chains.

It is found in the cell inner membrane. Its function is as follows. Key component of the proton channel; it plays a direct role in the translocation of protons across the membrane. The chain is ATP synthase subunit a from Marinobacter nauticus (strain ATCC 700491 / DSM 11845 / VT8) (Marinobacter aquaeolei).